The chain runs to 335 residues: Glutamyl-tRNA reductase (335 aa).

Residues 60–63, Ser-110, 115–117, and Gln-121 contribute to the substrate site; these read TCHR and ETE. Cys-61 acts as the Nucleophile in catalysis. 189–194 is a binding site for NADP(+); it reads GYSEIN.

The protein belongs to the glutamyl-tRNA reductase family. Homodimer.

The enzyme catalyses (S)-4-amino-5-oxopentanoate + tRNA(Glu) + NADP(+) = L-glutamyl-tRNA(Glu) + NADPH + H(+). The protein operates within porphyrin-containing compound metabolism; protoporphyrin-IX biosynthesis; 5-aminolevulinate from L-glutamyl-tRNA(Glu): step 1/2. Its function is as follows. Catalyzes the NADPH-dependent reduction of glutamyl-tRNA(Glu) to glutamate 1-semialdehyde (GSA). The chain is Glutamyl-tRNA reductase from Chlamydia trachomatis serovar A (strain ATCC VR-571B / DSM 19440 / HAR-13).